The primary structure comprises 416 residues: Phosphoglycerate kinase (416 aa).

14 residues coordinate (2R)-3-phosphoglycerate: Val-23, Asp-24, Phe-25, Asn-26, Gln-38, Arg-39, Ser-62, His-63, Gly-65, Arg-66, Leu-121, Arg-122, His-168, and Arg-169. Gly-212 contacts ADP. Gly-212 lines the CDP pocket. The AMP site is built by Ala-213 and Lys-214. Ala-213 lines the ATP pocket. Ala-213 contributes to the Mg(2+) binding site. Residue Asp-217 participates in CDP binding. Residue Asp-217 participates in Mg(2+) binding. Lys-218 is a binding site for AMP. ATP is bound at residue Lys-218. Gly-236 is a binding site for ADP. Gly-236 lines the CDP pocket. AMP-binding residues include Gly-237 and Gly-311. ATP is bound by residues Gly-237 and Gly-311. Positions 336 and 341 each coordinate CDP. Phe-341 is an ADP binding site. An AMP-binding site is contributed by Glu-342. Positions 342, 373, and 374 each coordinate ATP. Asp-373 lines the Mg(2+) pocket.

The protein belongs to the phosphoglycerate kinase family. In terms of assembly, monomer. It depends on Mg(2+) as a cofactor.

It localises to the cytoplasm. The protein localises to the mitochondrion. It catalyses the reaction (2R)-3-phosphoglycerate + ATP = (2R)-3-phospho-glyceroyl phosphate + ADP. Its pathway is carbohydrate degradation; glycolysis; pyruvate from D-glyceraldehyde 3-phosphate: step 2/5. Catalyzes one of the two ATP producing reactions in the glycolytic pathway via the reversible conversion of 1,3-diphosphoglycerate to 3-phosphoglycerate. Both L- and D- forms of purine and pyrimidine nucleotides can be used as substrates, but the activity is much lower on pyrimidines. Negatively regulates the biosynthesis of acetyl-CoA from pyruvate in the mitochondrion. The chain is Phosphoglycerate kinase (PGK1) from Komagataella pastoris (Yeast).